The following is a 769-amino-acid chain: Acetyl-coenzyme A carboxylase carboxyl transferase subunit alpha, chloroplastic (769 aa).

A chloroplast-targeting transit peptide spans 1–54 (MASISHSSLALGGASSASASDYLRSSSNGVNGVPLKTLGRAVFTTIRRKDLAVT). Residues 132–385 (LENKYRQALK…KIAINENMNE (254 aa)) form the CoA carboxyltransferase C-terminal domain. Coiled-coil stretches lie at residues 426–504 (EAVF…ASSE) and 631–744 (KQNQ…SDGS). Positions 718 to 769 (GLQEKQDELEKELAAARELAAEESDGSVKEDDDDDEDSSESGKSEMVNPSFA) are disordered. A compositionally biased stretch (basic and acidic residues) spans 721-732 (EKQDELEKELAA). The span at 738–756 (AEESDGSVKEDDDDDEDSS) shows a compositional bias: acidic residues. Ser741 carries the post-translational modification Phosphoserine.

It belongs to the AccA family. In terms of assembly, acetyl-CoA carboxylase is a heterohexamer composed of biotin carboxyl carrier protein, biotin carboxylase and two subunits each of ACCase subunit alpha and ACCase plastid-coded subunit beta (accD). In terms of tissue distribution, accumulates in fatty acids synthesizing tissues such as embryos, expanding leaves, flower buds, flowers, and developing siliques.

It is found in the plastid. Its subcellular location is the chloroplast inner membrane. The enzyme catalyses N(6)-carboxybiotinyl-L-lysyl-[protein] + acetyl-CoA = N(6)-biotinyl-L-lysyl-[protein] + malonyl-CoA. Its pathway is lipid metabolism; malonyl-CoA biosynthesis; malonyl-CoA from acetyl-CoA: step 1/1. In terms of biological role, component of the acetyl coenzyme A carboxylase (ACC) complex. First, biotin carboxylase catalyzes the carboxylation of biotin on its carrier protein (BCCP) and then the CO(2) group is transferred by the carboxyltransferase to acetyl-CoA to form malonyl-CoA. The chain is Acetyl-coenzyme A carboxylase carboxyl transferase subunit alpha, chloroplastic (CAC3) from Arabidopsis thaliana (Mouse-ear cress).